Consider the following 419-residue polypeptide: UDP-N-acetylglucosamine 1-carboxyvinyltransferase (419 aa).

Residue 22 to 23 (KN) coordinates phosphoenolpyruvate. A UDP-N-acetyl-alpha-D-glucosamine-binding site is contributed by Arg95. Cys119 (proton donor) is an active-site residue. Cys119 is modified (2-(S-cysteinyl)pyruvic acid O-phosphothioketal). UDP-N-acetyl-alpha-D-glucosamine contacts are provided by residues 164-167 (KVSV), Asp308, and Ile330.

It belongs to the EPSP synthase family. MurA subfamily.

Its subcellular location is the cytoplasm. It catalyses the reaction phosphoenolpyruvate + UDP-N-acetyl-alpha-D-glucosamine = UDP-N-acetyl-3-O-(1-carboxyvinyl)-alpha-D-glucosamine + phosphate. Its pathway is cell wall biogenesis; peptidoglycan biosynthesis. Its function is as follows. Cell wall formation. Adds enolpyruvyl to UDP-N-acetylglucosamine. The chain is UDP-N-acetylglucosamine 1-carboxyvinyltransferase from Rickettsia massiliae (strain Mtu5).